We begin with the raw amino-acid sequence, 380 residues long: MDFNLNDEQELFVAGIRELMASENWEAYFAECDRDSVYPERFVKALADMGIDSLLIPEEHGGLEAGFVTVAAVWMELGRLGAPTYVLYQLPGGFNTFLREGTQEQIDKIMAFRGTGKQMWNSAITEPGAGSDVGSLKTTYTRKNGKVYLNGSKCFITSSAYTPYIVVMARDGASPDKPVYTEWFVDMSKAGIKVNKLEKLGLRMDSCCEITFDDVELDEKDMFGREGNGFNRVKEEFDHERFLVALTNYGTAMCAFEDAARYANQRVQFGEAIGRFQLIQEKFAHMAIKLNSMKNMLLEAAWKADNGTITSGDAAMCKYFCANAAFEVVDTAMQVLGGVGIAGNHRITRFWRDLRVDRVSGGSDEMQILTLGRAVLKQYR.

It belongs to the acyl-CoA dehydrogenase family. Homotetramer. It depends on FAD as a cofactor.

The protein localises to the cytoplasm. The enzyme catalyses 4-(trimethylamino)butanoyl-CoA + oxidized [electron-transfer flavoprotein] + H(+) = crotonobetainyl-CoA + reduced [electron-transfer flavoprotein]. Its pathway is amine and polyamine metabolism; carnitine metabolism. In terms of biological role, catalyzes the reduction of crotonobetainyl-CoA to gamma-butyrobetainyl-CoA. This is Crotonobetainyl-CoA reductase from Salmonella agona (strain SL483).